The chain runs to 336 residues: tRNA-dihydrouridine(20/20a) synthase (336 aa).

Residues 24–26 and Gln77 each bind FMN; that span reads PMM. The active-site Proton donor is the Cys107. FMN-binding positions include Lys146, His178, 218-220, and 240-241; these read NGG and GR.

Belongs to the Dus family. DusA subfamily. It depends on FMN as a cofactor.

It catalyses the reaction 5,6-dihydrouridine(20) in tRNA + NADP(+) = uridine(20) in tRNA + NADPH + H(+). The enzyme catalyses 5,6-dihydrouridine(20) in tRNA + NAD(+) = uridine(20) in tRNA + NADH + H(+). It carries out the reaction 5,6-dihydrouridine(20a) in tRNA + NADP(+) = uridine(20a) in tRNA + NADPH + H(+). The catalysed reaction is 5,6-dihydrouridine(20a) in tRNA + NAD(+) = uridine(20a) in tRNA + NADH + H(+). Functionally, catalyzes the synthesis of 5,6-dihydrouridine (D), a modified base found in the D-loop of most tRNAs, via the reduction of the C5-C6 double bond in target uridines. Specifically modifies U20 and U20a in tRNAs. The polypeptide is tRNA-dihydrouridine(20/20a) synthase (Pseudomonas putida (strain ATCC 47054 / DSM 6125 / CFBP 8728 / NCIMB 11950 / KT2440)).